The sequence spans 180 residues: Ribulose bisphosphate carboxylase small subunit, chloroplastic (180 aa).

Residues 1–57 (MVSSMMVSSAATFTRASPAQSSMVAPFTGLKSASAFPVTRKPNADLSHLPSNGGRVQ) constitute a chloroplast transit peptide.

The protein belongs to the RuBisCO small chain family. Heterohexadecamer of 8 large and 8 small subunits.

The protein localises to the plastid. It is found in the chloroplast. Its function is as follows. RuBisCO catalyzes two reactions: the carboxylation of D-ribulose 1,5-bisphosphate, the primary event in carbon dioxide fixation, as well as the oxidative fragmentation of the pentose substrate. Both reactions occur simultaneously and in competition at the same active site. Although the small subunit is not catalytic it is essential for maximal activity. The protein is Ribulose bisphosphate carboxylase small subunit, chloroplastic of Musa acuminata (Banana).